An 891-amino-acid polypeptide reads, in one-letter code: Protein translocase subunit SecA (891 aa).

ATP contacts are provided by residues Gln-83, 101–105 (GEGKT), and Asp-489.

It belongs to the SecA family.

The protein localises to the plastid. Its subcellular location is the chloroplast stroma. It is found in the chloroplast thylakoid membrane. The enzyme catalyses ATP + H2O + cellular proteinSide 1 = ADP + phosphate + cellular proteinSide 2.. Its function is as follows. Has a central role in coupling the hydrolysis of ATP to the transfer of proteins across the thylakoid membrane. The sequence is that of Protein translocase subunit SecA from Diacronema lutheri (Unicellular marine alga).